We begin with the raw amino-acid sequence, 218 residues long: Transmembrane gamma-carboxyglutamic acid protein 1 (218 aa).

Positions 1-20 are excised as a propeptide; it reads MGRVFLTGEKANSILKRYPR. Residues 21–66 form the Gla domain; it reads ANGFFEEIRQGNIERECKEEFCTFEEAREAFENNEKTKEFWSTYTK. The Extracellular portion of the chain corresponds to 21-83; the sequence is ANGFFEEIRQ…RGSDWFQFYL (63 aa). Cysteines 37 and 42 form a disulfide. The chain crosses the membrane as a helical span at residues 84–106; that stretch reads TFPLIFGLFIILLVIFLIWRCFL. Residues 107–218 are Cytoplasmic-facing; sequence RNKTRRQTVT…PMVPVVTTIK (112 aa). A disordered region spans residues 161 to 195; the sequence is TRLSNCDPPPTYEEATGQVNLQRSETEPHLDPPPE.

Gla residues are produced after subsequent post-translational modifications of glutamate by a vitamin K-dependent gamma-carboxylase. As to expression, highly expressed in the spinal cord.

Its subcellular location is the membrane. The chain is Transmembrane gamma-carboxyglutamic acid protein 1 (PRRG1) from Homo sapiens (Human).